A 1220-amino-acid chain; its full sequence is Plasma membrane calcium-transporting ATPase 1 (1220 aa).

Gly2 bears the N-acetylglycine mark. At 2-105 the chain is on the cytoplasmic side; it reads GDMANNSVVY…KTFLQLVWEA (104 aa). Residues Ser8 and Ser17 each carry the phosphoserine modification. A helical membrane pass occupies residues 106–126; sequence LQDVTLIILEIAAIVSLGLSF. Topologically, residues 127–154 are extracellular; the sequence is YQPPEGDNALCGEVSVGEEEGEGETGWI. A helical transmembrane segment spans residues 155–175; that stretch reads EGAAILLSVVCVVLVTAFNDW. Residues 176 to 366 are Cytoplasmic-facing; sequence SKEKQFRGLQ…KEKSVLQGKL (191 aa). The segment at 297–356 is disordered; the sequence is EEEKKDEKKKEKKNKKQDGAIENRNKAKAQDGEPMEMQPLKSEEGGDGDEKDKKKANLPK. Basic and acidic residues-rich tracts occupy residues 312 to 327 and 337 to 356; these read KQDGAIENRNKAKAQD and KSEEGGDGDEKDKKKANLPK. Phosphoserine is present on Ser338. Residues 367-386 form a helical membrane-spanning segment; sequence TKLAVQIGKAGLLMSAITVI. Residues 387–418 lie on the Extracellular side of the membrane; that stretch reads ILVLYFLIDTFWVQKRPWLAECTPIYIQYFVK. Residues 419 to 439 form a helical membrane-spanning segment; the sequence is FFIIGVTVLVVAVPEGLPLPV. The Cytoplasmic portion of the chain corresponds to 440–855; that stretch reads TISLAYSVNE…RNVYDSISKF (416 aa). Asp475 functions as the 4-aspartylphosphate intermediate in the catalytic mechanism. 3 residues coordinate Mg(2+): Asp475, Thr477, and Asp797. Residues 856–876 traverse the membrane as a helical segment; that stretch reads LQFQLTVNVVAVIVAFTGACI. The Extracellular portion of the chain corresponds to 877 to 882; the sequence is TQDSPL. A helical transmembrane segment spans residues 883–903; that stretch reads KAVQMLWVNLIMDTLASLALA. Over 904–927 the chain is Cytoplasmic; the sequence is TEPPTESLLLGKPYGRNKPLISRT. The helical transmembrane segment at 928-948 threads the bilayer; the sequence is MMKNILGHAFYQLVVVFTLLL. Residues 949–971 lie on the Extracellular side of the membrane; the sequence is AGEKFFDIDSGRNAPLHAPPSEH. Residues 972-991 traverse the membrane as a helical segment; the sequence is YTIVFNIFVLMQLFNEINAR. The Cytoplasmic segment spans residues 992 to 1005; it reads KIHGERNVFEGIFN. The helical transmembrane segment at 1006-1027 threads the bilayer; that stretch reads NAIFCTIVLGTFVVQIIIVQFA. Topologically, residues 1028 to 1039 are extracellular; that stretch reads GKPFSCSELSVE. Residues 1040–1060 form a helical membrane-spanning segment; it reads QWLWSIFLGMGTLLWGQLIST. The Cytoplasmic segment spans residues 1061 to 1220; it reads IPTSRLKFQK…SPLHSLETSL (160 aa). The segment at 1100–1117 is calmodulin-binding subdomain A; it reads LRRWQILWFRGLNRIQTQ. Thr1116 carries the post-translational modification Phosphothreonine; by PKC. A required for basolateral membrane targeting region spans residues 1118-1220; the sequence is IRVVNAFRSS…SPLHSLETSL (103 aa). Phosphoserine occurs at positions 1140 and 1155. A disordered region spans residues 1160–1220; sequence PLIDDTDAED…SPLHSLETSL (61 aa). Thr1165 bears the Phosphothreonine mark. Ser1177 bears the Phosphoserine; by PKA mark. Phosphoserine occurs at positions 1178 and 1182. The segment covering 1200 to 1220 has biased composition (polar residues); the sequence is MNKSATSSSPGSPLHSLETSL.

The protein belongs to the cation transport ATPase (P-type) (TC 3.A.3) family. Type IIB subfamily. Monomer. Dimer. Oligomer. Calmodulin binding. Interacts with PDZD11. Interacts with SLC35G1 and STIM1. Interacts with YWHAE; interacts with the monomeric and dimeric forms of the YWHAE but prefer the monomer form; this interaction inhibits calcium-transporting ATPase activity. Interacts with NPTN; this interaction stabilizes ATP2B1 and increases ATPase activity; this interaction controls T cell calcium homeostasis following T cell activation. Interacts with EPB41; regulates small intestinal calcium absorption through regulation of membrane expression of ATP2B1. As to expression, isoform B is ubiquitously expressed and is the most predominant isoform. Isoform C is expressed at much lower levels in all tissues tested, but liver, while isoform A is found only in aorta, brain and stomach.

The protein localises to the cell membrane. It is found in the basolateral cell membrane. It localises to the synapse. Its subcellular location is the presynaptic cell membrane. The protein resides in the cytoplasmic vesicle. The protein localises to the secretory vesicle. It is found in the synaptic vesicle membrane. The enzyme catalyses Ca(2+)(in) + ATP + H2O = Ca(2+)(out) + ADP + phosphate + H(+). Functionally, catalyzes the hydrolysis of ATP coupled with the transport of calcium from the cytoplasm to the extracellular space thereby maintaining intracellular calcium homeostasis. Plays a role in blood pressure regulation through regulation of intracellular calcium concentration and nitric oxide production leading to regulation of vascular smooth muscle cells vasoconstriction. Positively regulates bone mineralization through absorption of calcium from the intestine. Plays dual roles in osteoclast differentiation and survival by regulating RANKL-induced calcium oscillations in preosteoclasts and mediating calcium extrusion in mature osteoclasts. Regulates insulin sensitivity through calcium/calmodulin signaling pathway by regulating AKT1 activation and NOS3 activation in endothelial cells. May play a role in synaptic transmission by modulating calcium and proton dynamics at the synaptic vesicles. The protein is Plasma membrane calcium-transporting ATPase 1 of Oryctolagus cuniculus (Rabbit).